The primary structure comprises 256 residues: Type III pantothenate kinase (256 aa).

Residue 7–14 coordinates ATP; sequence DVGNTRLK. Substrate contacts are provided by residues tyrosine 96 and 103-106; that span reads GADR. Aspartate 105 acts as the Proton acceptor in catalysis. ATP is bound at residue threonine 133. Threonine 183 provides a ligand contact to substrate.

This sequence belongs to the type III pantothenate kinase family. In terms of assembly, homodimer. NH4(+) is required as a cofactor. The cofactor is K(+).

It is found in the cytoplasm. The catalysed reaction is (R)-pantothenate + ATP = (R)-4'-phosphopantothenate + ADP + H(+). It functions in the pathway cofactor biosynthesis; coenzyme A biosynthesis; CoA from (R)-pantothenate: step 1/5. In terms of biological role, catalyzes the phosphorylation of pantothenate (Pan), the first step in CoA biosynthesis. In Verminephrobacter eiseniae (strain EF01-2), this protein is Type III pantothenate kinase.